The sequence spans 850 residues: Elongation factor 2 (850 aa).

Positions 17 to 351 constitute a tr-type G domain; it reads KNIRNISVIA…QIALKLPSPL (335 aa). GTP contacts are provided by residues 26–33, 159–162, and 213–215; these read AHVDHGKS, NKLD, and SGL. Position 707 is a diphthamide (histidine 707).

The protein belongs to the TRAFAC class translation factor GTPase superfamily. Classic translation factor GTPase family. EF-G/EF-2 subfamily.

The protein resides in the cytoplasm. The enzyme catalyses GTP + H2O = GDP + phosphate + H(+). The protein operates within protein biosynthesis; polypeptide chain elongation. Functionally, catalyzes the GTP-dependent ribosomal translocation step during translation elongation. During this step, the ribosome changes from the pre-translocational (PRE) to the post-translocational (POST) state as the newly formed A-site-bound peptidyl-tRNA and P-site-bound deacylated tRNA move to the P and E sites, respectively. Catalyzes the coordinated movement of the two tRNA molecules, the mRNA and conformational changes in the ribosome. This chain is Elongation factor 2 (EFT1), found in Encephalitozoon cuniculi (strain GB-M1) (Microsporidian parasite).